A 505-amino-acid polypeptide reads, in one-letter code: ATP synthase subunit alpha (505 aa).

Residue 170-177 (GDRQTGKT) coordinates ATP.

It belongs to the ATPase alpha/beta chains family. In terms of assembly, F-type ATPases have 2 components, CF(1) - the catalytic core - and CF(0) - the membrane proton channel. CF(1) has five subunits: alpha(3), beta(3), gamma(1), delta(1), epsilon(1). CF(0) has four main subunits: a(1), b(1), b'(1) and c(9-12).

Its subcellular location is the cellular thylakoid membrane. It carries out the reaction ATP + H2O + 4 H(+)(in) = ADP + phosphate + 5 H(+)(out). In terms of biological role, produces ATP from ADP in the presence of a proton gradient across the membrane. The alpha chain is a regulatory subunit. The sequence is that of ATP synthase subunit alpha from Prochlorococcus marinus (strain SARG / CCMP1375 / SS120).